The chain runs to 510 residues: Probable DNA ligase (510 aa).

E210 contributes to the ATP binding site. K212 functions as the N6-AMP-lysine intermediate in the catalytic mechanism. The ATP site is built by R217, R232, E261, F296, R367, and K373.

Belongs to the ATP-dependent DNA ligase family. Mg(2+) is required as a cofactor.

The enzyme catalyses ATP + (deoxyribonucleotide)n-3'-hydroxyl + 5'-phospho-(deoxyribonucleotide)m = (deoxyribonucleotide)n+m + AMP + diphosphate.. Its function is as follows. DNA ligase that seals nicks in double-stranded DNA during DNA replication, DNA recombination and DNA repair. This is Probable DNA ligase from Saccharopolyspora erythraea (strain ATCC 11635 / DSM 40517 / JCM 4748 / NBRC 13426 / NCIMB 8594 / NRRL 2338).